A 410-amino-acid polypeptide reads, in one-letter code: Schlafen-like protein 1 (410 aa).

Disordered regions lie at residues 1-20 (MSLR…VMSQ) and 141-199 (LHHR…SGVR). The span at 8-20 (AQTQMWESPVMSQ) shows a compositional bias: polar residues. Residues 154 to 173 (SHSPGPSPGPSPGLRHPPLP) are compositionally biased toward pro residues. Residue 264 to 271 (GVEDSGLV) participates in ATP binding. A coiled-coil region spans residues 370-401 (QKWAMELGKLEEKVKVLTLEKEQLQQQLRQRQ).

Belongs to the Schlafen family. Subgroup I subfamily.

This Mus musculus (Mouse) protein is Schlafen-like protein 1 (Slfnl1).